The sequence spans 26 residues: Ribulose bisphosphate carboxylase large chain (26 aa).

Residues 1–2 (MS) constitute a propeptide that is removed on maturation. An N-acetylproline modification is found at Pro-3.

It belongs to the RuBisCO large chain family. Type I subfamily. In terms of assembly, heterohexadecamer of 8 large chains and 8 small chains.

It is found in the plastid. The protein resides in the chloroplast. It carries out the reaction 2 (2R)-3-phosphoglycerate + 2 H(+) = D-ribulose 1,5-bisphosphate + CO2 + H2O. It catalyses the reaction D-ribulose 1,5-bisphosphate + O2 = 2-phosphoglycolate + (2R)-3-phosphoglycerate + 2 H(+). RuBisCO catalyzes two reactions: the carboxylation of D-ribulose 1,5-bisphosphate, the primary event in carbon dioxide fixation, as well as the oxidative fragmentation of the pentose substrate in the photorespiration process. Both reactions occur simultaneously and in competition at the same active site. The polypeptide is Ribulose bisphosphate carboxylase large chain (rbcL) (Vicia faba (Broad bean)).